Reading from the N-terminus, the 765-residue chain is Probable ATP-dependent RNA helicase DDX27 (765 aa).

Phosphoserine occurs at positions 23, 25, and 48. Acidic residues predominate over residues 43-63 (LGKNRSADFNPDFVFTEKEGT). Disordered regions lie at residues 43–83 (LGKN…KRAA) and 111–179 (KEKE…FFED). A Required for interaction with the PEBOW complex motif is present at residues 55–57 (FVF). A compositionally biased stretch (basic and acidic residues) spans 129 to 156 (ENDEEGSEDEASETDYSSADENILTKAD). Residues Ser-135 and Ser-146 each carry the phosphoserine modification. Residues 157 to 172 (TLKVKDRKKKKKKGQE) show a composition bias toward acidic residues. The Nuclear localization signal signature appears at 164 to 169 (KKKKKK). Positions 187–215 (LSFQDMNLSRPLLKAITAMGFKQPTPIQK) match the Q motif motif. The Helicase ATP-binding domain occupies 218–392 (IPVGLLGKDI…SVSLKNPVRI (175 aa)). 231-238 (AATGTGKT) serves as a coordination point for ATP. Positions 340–343 (DEAD) match the DEAD box motif. The Helicase C-terminal domain maps to 426–572 (LLTRTFTDHV…DVILKFRDKI (147 aa)). Residues 716-725 (VFDEELTNTS) are compositionally biased toward basic residues.

Belongs to the DEAD box helicase family. DDX27/DRS1 subfamily. Associates with PeBoW complex, composed of BOP1, PES1 and WDR12. Interacts directly with BOP1 and PES1.

It is found in the nucleus. The protein resides in the nucleolus. Its subcellular location is the chromosome. The catalysed reaction is ATP + H2O = ADP + phosphate + H(+). Its function is as follows. Probable ATP-dependent RNA helicase. Component of the nucleolar ribosomal RNA (rRNA) processing machinery that regulates 3' end formation of ribosomal 47S rRNA. The polypeptide is Probable ATP-dependent RNA helicase DDX27 (DDX27) (Homo sapiens (Human)).